The following is a 403-amino-acid chain: S-adenosylmethionine synthase (403 aa).

Residue histidine 16 participates in ATP binding. Aspartate 18 provides a ligand contact to Mg(2+). A K(+)-binding site is contributed by glutamate 44. The L-methionine site is built by glutamate 57 and glutamine 100. The interval 100-110 (QSNDIAQGVDH) is flexible loop. ATP is bound by residues 167 to 169 (DAK), 238 to 239 (RF), aspartate 247, 253 to 254 (RK), alanine 270, and lysine 274. Aspartate 247 is an L-methionine binding site. Lysine 278 provides a ligand contact to L-methionine.

Belongs to the AdoMet synthase family. Homotetramer; dimer of dimers. Mg(2+) is required as a cofactor. It depends on K(+) as a cofactor.

The protein resides in the cytoplasm. It catalyses the reaction L-methionine + ATP + H2O = S-adenosyl-L-methionine + phosphate + diphosphate. It participates in amino-acid biosynthesis; S-adenosyl-L-methionine biosynthesis; S-adenosyl-L-methionine from L-methionine: step 1/1. Catalyzes the formation of S-adenosylmethionine (AdoMet) from methionine and ATP. The overall synthetic reaction is composed of two sequential steps, AdoMet formation and the subsequent tripolyphosphate hydrolysis which occurs prior to release of AdoMet from the enzyme. The chain is S-adenosylmethionine synthase from Verminephrobacter eiseniae (strain EF01-2).